We begin with the raw amino-acid sequence, 386 residues long: MNIHEYQGKAVLRSYGVSVPNGKVAFTVEEAVEAAKELGTDVCVVKAQIHAGGRGKAGGVKVAKNLDEVRTYAESILGTTLVTHQTGPEGKEVKRLLIEEGCDIKKEYYVGLVLDRATSQVVLMASEEGGTEIEEVAEKTPEKIFKEYIDPAVGLQGFQARRIAFNINIPKELVGQAVKFMMGLYRAFIEKDCSIAEINPLVTTGDGKVMALDAKLNFDSNALYRHKDILELRDLDEEDAKEIEASKYDLNYIPLDGNIGCMVNGAGLAMATMDIIKHYHGDPANFLDVGGGATAEKVTEAFKIILSDKNVKGIFVNIFGGIMKCDVIAEGVIEATKQVGLELPLVVRLEGTNVELGKKILNESGLNIVAAESMTDGAQKIVSLVG.

The ATP-grasp domain maps to Lys9–Glu244. Residues Lys46, Gly53–Gly55, Glu99, Cys102, and Glu107 each bind ATP. The Mg(2+) site is built by Asn199 and Asp213. Substrate is bound by residues Asn264 and Gly321–Met323.

Belongs to the succinate/malate CoA ligase beta subunit family. Heterotetramer of two alpha and two beta subunits. Requires Mg(2+) as cofactor.

It catalyses the reaction succinate + ATP + CoA = succinyl-CoA + ADP + phosphate. It carries out the reaction GTP + succinate + CoA = succinyl-CoA + GDP + phosphate. Its pathway is carbohydrate metabolism; tricarboxylic acid cycle; succinate from succinyl-CoA (ligase route): step 1/1. In terms of biological role, succinyl-CoA synthetase functions in the citric acid cycle (TCA), coupling the hydrolysis of succinyl-CoA to the synthesis of either ATP or GTP and thus represents the only step of substrate-level phosphorylation in the TCA. The beta subunit provides nucleotide specificity of the enzyme and binds the substrate succinate, while the binding sites for coenzyme A and phosphate are found in the alpha subunit. This chain is Succinate--CoA ligase [ADP-forming] subunit beta, found in Bacillus anthracis (strain A0248).